Here is a 323-residue protein sequence, read N- to C-terminus: MMKNETSNFQIGRFLIEQRSFIALIILIAIVSMINPDFFSVDNILNILRQTSVNAIIAVGMTFVILIAGIDLSVGSVLALTGAIAASMVSIELPIFLVIPVVLLIGTLLGGISGVIVAKGKVQAFIATLVTMTLLRGITMVYTDGRPITTGFSDNADLFASIGTGYVLGIPVPIWIMSIVFAVAWYILKDTPIGRYIYALGGNEAATQLSGINVNKIKVFVFAVSGFLSALAGLIVTSRLSSAQPTAGVSYELDAIAAVVVGGTSLMGGKGRVMGTLIGALIIGFLNNALNLLDISSYYQMIAKALVILVAVLADNYLGTKKL.

A run of 7 helical transmembrane segments spans residues 21-41 (FIAL…FFSV), 55-75 (AIIA…LSVG), 95-115 (IFLV…ISGV), 122-142 (VQAF…TMVY), 167-187 (VLGI…AWYI), 217-237 (IKVF…LIVT), and 273-293 (VMGT…LNLL).

This sequence belongs to the binding-protein-dependent transport system permease family. AraH/RbsC subfamily. As to quaternary structure, the complex is composed of an ATP-binding protein (RbsA), two transmembrane proteins (RbsC) and a solute-binding protein (RbsB).

The protein localises to the cell inner membrane. Its function is as follows. Part of the ABC transporter complex RbsABC involved in ribose import. Probably responsible for the translocation of the substrate across the membrane. In Haemophilus influenzae (strain ATCC 51907 / DSM 11121 / KW20 / Rd), this protein is Ribose import permease protein RbsC (rbsC).